The sequence spans 398 residues: Arginine biosynthesis bifunctional protein ArgJ (398 aa).

Substrate contacts are provided by Thr148, Lys174, Thr185, Glu271, Asn393, and Thr398. The Nucleophile role is filled by Thr185.

The protein belongs to the ArgJ family. In terms of assembly, heterotetramer of two alpha and two beta chains.

It is found in the cytoplasm. It catalyses the reaction N(2)-acetyl-L-ornithine + L-glutamate = N-acetyl-L-glutamate + L-ornithine. The enzyme catalyses L-glutamate + acetyl-CoA = N-acetyl-L-glutamate + CoA + H(+). Its pathway is amino-acid biosynthesis; L-arginine biosynthesis; L-ornithine and N-acetyl-L-glutamate from L-glutamate and N(2)-acetyl-L-ornithine (cyclic): step 1/1. It participates in amino-acid biosynthesis; L-arginine biosynthesis; N(2)-acetyl-L-ornithine from L-glutamate: step 1/4. Its function is as follows. Catalyzes two activities which are involved in the cyclic version of arginine biosynthesis: the synthesis of N-acetylglutamate from glutamate and acetyl-CoA as the acetyl donor, and of ornithine by transacetylation between N(2)-acetylornithine and glutamate. The sequence is that of Arginine biosynthesis bifunctional protein ArgJ from Listeria monocytogenes serotype 4b (strain F2365).